The sequence spans 501 residues: Type B diterpene cyclase (501 aa).

It belongs to the terpene synthase family. In terms of assembly, monomer. Mg(2+) is required as a cofactor.

It catalyses the reaction geranylgeranyl diphosphate = tuberculosinyl diphosphate. Its activity is regulated as follows. Strongly inhibited by 15-aza-dihydrogeranylgeraniol and 5-isopropyl-N,N,N,2-tetramethyl-4-(piperidine-1-carbonyloxy)benzenaminium chloride (Amo-1618). Inhibited by GGPP concentrations higher than 50 uM. Functionally, catalyzes the formation of tuberculosinyl diphosphate from geranylgeranyl diphosphate (GGPP). It could also react with (14R/S)-14,15-oxidoGGPP to generate 3alpha- and 3beta-hydroxytuberculosinyl diphosphate. The polypeptide is Type B diterpene cyclase (Mycobacterium tuberculosis (strain ATCC 25618 / H37Rv)).